We begin with the raw amino-acid sequence, 227 residues long: ATP synthase F(0) complex subunit a (227 aa).

6 helical membrane passes run 12-32 (PCLL…LLLP), 69-89 (WALL…LGLL), 98-118 (QLSM…LTGL), 139-159 (IPAL…ALGV), 170-190 (LLIQ…PSIS), and 196-216 (ILFL…YVFV).

Belongs to the ATPase A chain family. In terms of assembly, component of the ATP synthase complex composed at least of ATP5F1A/subunit alpha, ATP5F1B/subunit beta, ATP5MC1/subunit c (homooctomer), MT-ATP6/subunit a, MT-ATP8/subunit 8, ATP5ME/subunit e, ATP5MF/subunit f, ATP5MG/subunit g, ATP5MK/subunit k, ATP5MJ/subunit j, ATP5F1C/subunit gamma, ATP5F1D/subunit delta, ATP5F1E/subunit epsilon, ATP5PF/subunit F6, ATP5PB/subunit b, ATP5PD/subunit d, ATP5PO/subunit OSCP. ATP synthase complex consists of a soluble F(1) head domain (subunits alpha(3) and beta(3)) - the catalytic core - and a membrane F(0) domain - the membrane proton channel (subunits c, a, 8, e, f, g, k and j). These two domains are linked by a central stalk (subunits gamma, delta, and epsilon) rotating inside the F1 region and a stationary peripheral stalk (subunits F6, b, d, and OSCP). Interacts with DNAJC30; interaction is direct.

It is found in the mitochondrion inner membrane. It carries out the reaction H(+)(in) = H(+)(out). In terms of biological role, subunit a, of the mitochondrial membrane ATP synthase complex (F(1)F(0) ATP synthase or Complex V) that produces ATP from ADP in the presence of a proton gradient across the membrane which is generated by electron transport complexes of the respiratory chain. ATP synthase complex consist of a soluble F(1) head domain - the catalytic core - and a membrane F(1) domain - the membrane proton channel. These two domains are linked by a central stalk rotating inside the F(1) region and a stationary peripheral stalk. During catalysis, ATP synthesis in the catalytic domain of F(1) is coupled via a rotary mechanism of the central stalk subunits to proton translocation. With the subunit c (ATP5MC1), forms the proton-conducting channel in the F(0) domain, that contains two crucial half-channels (inlet and outlet) that facilitate proton movement from the mitochondrial intermembrane space (IMS) into the matrix. Protons are taken up via the inlet half-channel and released through the outlet half-channel, following a Grotthuss mechanism. The polypeptide is ATP synthase F(0) complex subunit a (Gallus gallus (Chicken)).